The primary structure comprises 306 residues: UDP-3-O-acyl-N-acetylglucosamine deacetylase (306 aa).

Zn(2+) contacts are provided by His-79, His-238, and Asp-242. Catalysis depends on His-265, which acts as the Proton donor.

It belongs to the LpxC family. Zn(2+) is required as a cofactor.

The enzyme catalyses a UDP-3-O-[(3R)-3-hydroxyacyl]-N-acetyl-alpha-D-glucosamine + H2O = a UDP-3-O-[(3R)-3-hydroxyacyl]-alpha-D-glucosamine + acetate. It participates in glycolipid biosynthesis; lipid IV(A) biosynthesis; lipid IV(A) from (3R)-3-hydroxytetradecanoyl-[acyl-carrier-protein] and UDP-N-acetyl-alpha-D-glucosamine: step 2/6. In terms of biological role, catalyzes the hydrolysis of UDP-3-O-myristoyl-N-acetylglucosamine to form UDP-3-O-myristoylglucosamine and acetate, the committed step in lipid A biosynthesis. The sequence is that of UDP-3-O-acyl-N-acetylglucosamine deacetylase from Shewanella baltica (strain OS223).